A 146-amino-acid chain; its full sequence is MYPAHLLVLLAVCVSLLGAASIPPQPLNLVQFSYLIQCANHGSRATWHYTDYGCYCGSGGSGTPVDELDRCCQTHDNCYAEAEKKGCYPKMSAYDYYCGENGPYCRNIKKECQRFVCDCDVEAAKCFARAPYNDANWNIDTKKRCQ.

Positions 1–19 are cleaved as a signal peptide; the sequence is MYPAHLLVLLAVCVSLLGA. Positions 20–27 are excised as a propeptide; the sequence is ASIPPQPL. Intrachain disulfides connect Cys38–Cys98, Cys54–Cys145, Cys56–Cys72, Cys71–Cys126, Cys78–Cys119, Cys87–Cys112, and Cys105–Cys117. Ca(2+) is bound by residues Tyr55, Gly57, and Gly59. His75 is an active-site residue. Position 76 (Asp76) interacts with Ca(2+). The active site involves Asp120.

The protein belongs to the phospholipase A2 family. Group I subfamily. D49 sub-subfamily. Ca(2+) is required as a cofactor. As to expression, expressed by the venom gland.

Its subcellular location is the secreted. The catalysed reaction is a 1,2-diacyl-sn-glycero-3-phosphocholine + H2O = a 1-acyl-sn-glycero-3-phosphocholine + a fatty acid + H(+). Functionally, snake venom phospholipase A2 (PLA2) that inhibits collagen-induced platelet aggregation. PLA2 catalyzes the calcium-dependent hydrolysis of the 2-acyl groups in 3-sn-phosphoglycerides. The chain is Acidic phospholipase A2 S13-69J from Austrelaps superbus (Lowland copperhead snake).